Reading from the N-terminus, the 233-residue chain is Small ribosomal subunit protein uS2 (233 aa).

The protein belongs to the universal ribosomal protein uS2 family.

The sequence is that of Small ribosomal subunit protein uS2 from Clostridium acetobutylicum (strain ATCC 824 / DSM 792 / JCM 1419 / IAM 19013 / LMG 5710 / NBRC 13948 / NRRL B-527 / VKM B-1787 / 2291 / W).